The sequence spans 360 residues: Phosphoserine aminotransferase (360 aa).

An L-glutamate-binding site is contributed by Arg-41. Trp-101, Thr-152, Asp-172, and Gln-195 together coordinate pyridoxal 5'-phosphate. Lys-196 is modified (N6-(pyridoxal phosphate)lysine). 237–238 (NT) is a pyridoxal 5'-phosphate binding site.

Belongs to the class-V pyridoxal-phosphate-dependent aminotransferase family. SerC subfamily. As to quaternary structure, homodimer. The cofactor is pyridoxal 5'-phosphate.

The protein resides in the cytoplasm. The catalysed reaction is O-phospho-L-serine + 2-oxoglutarate = 3-phosphooxypyruvate + L-glutamate. It carries out the reaction 4-(phosphooxy)-L-threonine + 2-oxoglutarate = (R)-3-hydroxy-2-oxo-4-phosphooxybutanoate + L-glutamate. Its pathway is amino-acid biosynthesis; L-serine biosynthesis; L-serine from 3-phospho-D-glycerate: step 2/3. It functions in the pathway cofactor biosynthesis; pyridoxine 5'-phosphate biosynthesis; pyridoxine 5'-phosphate from D-erythrose 4-phosphate: step 3/5. Functionally, catalyzes the reversible conversion of 3-phosphohydroxypyruvate to phosphoserine and of 3-hydroxy-2-oxo-4-phosphonooxybutanoate to phosphohydroxythreonine. This Paraburkholderia phytofirmans (strain DSM 17436 / LMG 22146 / PsJN) (Burkholderia phytofirmans) protein is Phosphoserine aminotransferase.